Here is a 180-residue protein sequence, read N- to C-terminus: MDLRTALQTFESTRRLLELCSNRTSFLWRWLFGTPLSRLVRQVKLEYEKDFERILDQCPGVFESLELGYHKVFEEKIVKELDFSSPGRAVAAVAFASYLLDRWNTRTHLSPGYQMDYISLNLWKFWLRRRVYNYSRGLPQLGPAAPLARQGSQQEEQQQRQEEEQVQEEMRSGLDPPTEN.

The interval 142 to 180 (GPAAPLARQGSQQEEQQQRQEEEQVQEEMRSGLDPPTEN) is disordered. Residues 157-172 (QQQRQEEEQVQEEMRS) are compositionally biased toward basic and acidic residues.

This sequence belongs to the adenoviridae E1B 19 kDa protein family.

This chain is E1B protein, small T-antigen, found in Simian adenovirus serotype 7 (SAdV-7).